Consider the following 72-residue polypeptide: DNA gyrase inhibitor YacG (72 aa).

Zn(2+)-binding residues include Cys-17, Cys-20, Cys-32, and Cys-36. Positions 51 to 72 (IPGPEEEEMSYPPRSDDENRSR) are disordered.

It belongs to the DNA gyrase inhibitor YacG family. As to quaternary structure, interacts with GyrB. The cofactor is Zn(2+).

Inhibits all the catalytic activities of DNA gyrase by preventing its interaction with DNA. Acts by binding directly to the C-terminal domain of GyrB, which probably disrupts DNA binding by the gyrase. This is DNA gyrase inhibitor YacG from Methylorubrum extorquens (strain PA1) (Methylobacterium extorquens).